Consider the following 538-residue polypeptide: GSY2-interacting protein PIG2 (538 aa).

Serine 162, serine 196, serine 296, and serine 304 each carry phosphoserine. The CBM21 domain occupies 384–508 (LNLSRGRPVF…NNDSANYKID (125 aa)).

Its function is as follows. Interacts with glycogen synthase 2 (GSY2); possibly also interacts with phosphatase 1 (GLC7). In Saccharomyces cerevisiae (strain ATCC 204508 / S288c) (Baker's yeast), this protein is GSY2-interacting protein PIG2 (PIG2).